The primary structure comprises 432 residues: Adenylosuccinate synthetase (432 aa).

GTP is bound by residues 13 to 19 and 41 to 43; these read GDEGKGK and GHT. Asp14 (proton acceptor) is an active-site residue. 2 residues coordinate Mg(2+): Asp14 and Gly41. IMP is bound by residues 14-17, 39-42, Thr130, Arg144, Gln225, Thr240, and Arg304; these read DEGK and NAGH. His42 functions as the Proton donor in the catalytic mechanism. 300-306 provides a ligand contact to substrate; that stretch reads ATTGRRR. GTP is bound by residues Arg306, 332-334, and 415-417; these read KLD and STG.

Belongs to the adenylosuccinate synthetase family. In terms of assembly, homodimer. Mg(2+) serves as cofactor.

The protein resides in the cytoplasm. It catalyses the reaction IMP + L-aspartate + GTP = N(6)-(1,2-dicarboxyethyl)-AMP + GDP + phosphate + 2 H(+). The protein operates within purine metabolism; AMP biosynthesis via de novo pathway; AMP from IMP: step 1/2. In terms of biological role, plays an important role in the de novo pathway of purine nucleotide biosynthesis. Catalyzes the first committed step in the biosynthesis of AMP from IMP. This Cronobacter sakazakii (strain ATCC BAA-894) (Enterobacter sakazakii) protein is Adenylosuccinate synthetase.